Consider the following 275-residue polypeptide: NH(3)-dependent NAD(+) synthetase (275 aa).

50 to 57 (GISGGVDS) contacts ATP. Aspartate 56 serves as a coordination point for Mg(2+). Residue arginine 147 coordinates deamido-NAD(+). Threonine 167 is a binding site for ATP. Glutamate 172 serves as a coordination point for Mg(2+). 2 residues coordinate deamido-NAD(+): lysine 180 and aspartate 187. Positions 196 and 218 each coordinate ATP. Deamido-NAD(+) is bound at residue 267 to 268 (HK).

This sequence belongs to the NAD synthetase family. Homodimer.

The enzyme catalyses deamido-NAD(+) + NH4(+) + ATP = AMP + diphosphate + NAD(+) + H(+). It participates in cofactor biosynthesis; NAD(+) biosynthesis; NAD(+) from deamido-NAD(+) (ammonia route): step 1/1. Functionally, catalyzes the ATP-dependent amidation of deamido-NAD to form NAD. Uses ammonia as a nitrogen source. This chain is NH(3)-dependent NAD(+) synthetase, found in Pseudomonas putida (strain ATCC 47054 / DSM 6125 / CFBP 8728 / NCIMB 11950 / KT2440).